The primary structure comprises 568 residues: PTS system lactose-specific EIICB component (568 aa).

The 402-residue stretch at 8–409 (IEKGKPFFEK…LVDTVIYYPF (402 aa)) folds into the PTS EIIC type-3 domain. 10 helical membrane passes run 30-50 (GFIS…IAYV), 65-85 (MLMT…AGTT), 103-123 (INFI…AADP), 128-148 (GFLS…AAFI), 183-203 (FAFS…VIGV), 222-242 (GYLG…VGIH), 246-266 (IVEP…AHLI), 283-303 (FIVT…FMWL), 339-359 (VFFI…KFFV), and 381-401 (IVLG…LILV). The region spanning 465 to 568 (ETNVLVLCAG…LAFVEEQFKD (104 aa)) is the PTS EIIB type-3 domain. The Phosphocysteine intermediate; for EIIB activity role is filled by cysteine 472. Cysteine 472 bears the Phosphocysteine; by EIIA mark.

The protein resides in the cell membrane. It catalyses the reaction lactose(out) + N(pros)-phospho-L-histidyl-[protein] = lactose 6-phosphate(in) + L-histidyl-[protein]. Its function is as follows. The phosphoenolpyruvate-dependent sugar phosphotransferase system (sugar PTS), a major carbohydrate active transport system, catalyzes the phosphorylation of incoming sugar substrates concomitantly with their translocation across the cell membrane. The enzyme II LacEF PTS system is involved in lactose transport. This is PTS system lactose-specific EIICB component from Streptococcus mutans serotype c (strain ATCC 700610 / UA159).